The following is a 427-amino-acid chain: Enolase (427 aa).

Q162 is a (2R)-2-phosphoglycerate binding site. Catalysis depends on E204, which acts as the Proton donor. Mg(2+)-binding residues include D241, E282, and D309. 4 residues coordinate (2R)-2-phosphoglycerate: K334, R363, S364, and K385. K334 (proton acceptor) is an active-site residue.

The protein belongs to the enolase family. It depends on Mg(2+) as a cofactor.

Its subcellular location is the cytoplasm. The protein localises to the secreted. It is found in the cell surface. It catalyses the reaction (2R)-2-phosphoglycerate = phosphoenolpyruvate + H2O. The protein operates within carbohydrate degradation; glycolysis; pyruvate from D-glyceraldehyde 3-phosphate: step 4/5. Functionally, catalyzes the reversible conversion of 2-phosphoglycerate (2-PG) into phosphoenolpyruvate (PEP). It is essential for the degradation of carbohydrates via glycolysis. This chain is Enolase, found in Frankia alni (strain DSM 45986 / CECT 9034 / ACN14a).